A 405-amino-acid polypeptide reads, in one-letter code: Putative polysaccharide ligase RT0347 (405 aa).

A run of 10 helical transmembrane segments spans residues 23–43, 77–97, 120–140, 156–178, 201–221, 227–247, 270–290, 322–342, 353–375, and 377–397; these read IAATVLFFLLIIVITELISFI, LFIAWCFISCLFTIHPINSLV, ILYLKNSLILGIITAILLFFI, FGLYMLDRGCALLSITTWVVIII, ISDSLASFVGFSIGGIIFILA, IFFKLITISLITGSLLFPIIA, LFIWHFVANKIIIKPILGYGF, ILQITLELGILGLALFLCLVY, ISNFRAASYSCFINYYIIGMISY, and IWQTWWILSGIWILVLMKLLV.

This sequence belongs to the O-antigen ligase family.

The protein resides in the membrane. This Rickettsia typhi (strain ATCC VR-144 / Wilmington) protein is Putative polysaccharide ligase RT0347.